Here is a 360-residue protein sequence, read N- to C-terminus: Peptide chain release factor 1 (360 aa).

Gln-236 carries the post-translational modification N5-methylglutamine.

This sequence belongs to the prokaryotic/mitochondrial release factor family. In terms of processing, methylated by PrmC. Methylation increases the termination efficiency of RF1.

It is found in the cytoplasm. Its function is as follows. Peptide chain release factor 1 directs the termination of translation in response to the peptide chain termination codons UAG and UAA. The protein is Peptide chain release factor 1 of Ligilactobacillus salivarius (strain UCC118) (Lactobacillus salivarius).